The sequence spans 147 residues: Small ribosomal subunit protein uS12 (147 aa).

It belongs to the universal ribosomal protein uS12 family. As to quaternary structure, part of the 30S ribosomal subunit.

Functionally, with S4 and S5 plays an important role in translational accuracy. Located at the interface of the 30S and 50S subunits. The protein is Small ribosomal subunit protein uS12 of Methanococcus maripaludis (strain C5 / ATCC BAA-1333).